The primary structure comprises 267 residues: Hydroxyethylthiazole kinase (267 aa).

Met-44 provides a ligand contact to substrate. Residues Arg-120 and Thr-165 each contribute to the ATP site. Residue Gly-192 coordinates substrate.

The protein belongs to the Thz kinase family. Mg(2+) serves as cofactor.

It catalyses the reaction 5-(2-hydroxyethyl)-4-methylthiazole + ATP = 4-methyl-5-(2-phosphooxyethyl)-thiazole + ADP + H(+). The protein operates within cofactor biosynthesis; thiamine diphosphate biosynthesis; 4-methyl-5-(2-phosphoethyl)-thiazole from 5-(2-hydroxyethyl)-4-methylthiazole: step 1/1. Its function is as follows. Catalyzes the phosphorylation of the hydroxyl group of 4-methyl-5-beta-hydroxyethylthiazole (THZ). The chain is Hydroxyethylthiazole kinase from Carboxydothermus hydrogenoformans (strain ATCC BAA-161 / DSM 6008 / Z-2901).